Reading from the N-terminus, the 64-residue chain is Cytochrome c oxidase subunit 9, mitochondrial (64 aa).

Over 1 to 15 (MAATAVRPITGMLRR) the chain is Mitochondrial matrix. A helical membrane pass occupies residues 16-36 (GLILDIGIALGVGFVMANGYW). At 37–64 (YGYHMPRTNARDNYYKKLEEERAARMGA) the chain is on the mitochondrial intermembrane side.

It belongs to the fungal cytochrome c oxidase subunit 7a family. In terms of assembly, component of the cytochrome c oxidase (complex IV, CIV), a multisubunit enzyme composed of 11 subunits. The complex is composed of a catalytic core of 3 subunits Cox1, Cox2 and Cox3, encoded in the mitochondrial DNA, and 8 supernumerary subunits Cox4, Cox5a/Cox5, Cox6, Cox7, Cox8, Cox7a/Cox9, Cox6b/Cox12 and Cox6a/Cox13, which are encoded in the nuclear genome. The complex exists as a monomer or a dimer and forms respiratory supercomplexes (SCs) in the inner mitochondrial membrane with NADH-ubiquinone oxidoreductase (complex I, CI) and ubiquinol-cytochrome c oxidoreductase (cytochrome b-c1 complex, complex III, CIII), resulting in various different assemblies (supercomplexes I(1)IV(1), I(1)III(3)IV(2), III(2)IV(1) and III(2)IV(2) as well as larger supercomplexes of compositions like I(1)III(2)IV(5-6)).

The protein resides in the mitochondrion inner membrane. The protein operates within energy metabolism; oxidative phosphorylation. In terms of biological role, component of the cytochrome c oxidase, the last enzyme in the mitochondrial electron transport chain which drives oxidative phosphorylation. The respiratory chain contains 3 multisubunit complexes succinate dehydrogenase (complex II, CII), ubiquinol-cytochrome c oxidoreductase (cytochrome b-c1 complex, complex III, CIII) and cytochrome c oxidase (complex IV, CIV), that cooperate to transfer electrons derived from NADH and succinate to molecular oxygen, creating an electrochemical gradient over the inner membrane that drives transmembrane transport and the ATP synthase. Cytochrome c oxidase is the component of the respiratory chain that catalyzes the reduction of oxygen to water. Electrons originating from reduced cytochrome c in the intermembrane space (IMS) are transferred via the dinuclear copper A center (CU(A)) of Cox2 and heme A of Cox1 to the active site in Cox1, a binuclear center (BNC) formed by heme A3 and copper B (CU(B)). The BNC reduces molecular oxygen to 2 water molecules using 4 electrons from cytochrome c in the IMS and 4 protons from the mitochondrial matrix. In Neurospora crassa (strain ATCC 24698 / 74-OR23-1A / CBS 708.71 / DSM 1257 / FGSC 987), this protein is Cytochrome c oxidase subunit 9, mitochondrial (cox-17).